We begin with the raw amino-acid sequence, 119 residues long: Ribonuclease P protein component (119 aa).

The protein belongs to the RnpA family. Consists of a catalytic RNA component (M1 or rnpB) and a protein subunit.

It carries out the reaction Endonucleolytic cleavage of RNA, removing 5'-extranucleotides from tRNA precursor.. Its function is as follows. RNaseP catalyzes the removal of the 5'-leader sequence from pre-tRNA to produce the mature 5'-terminus. It can also cleave other RNA substrates such as 4.5S RNA. The protein component plays an auxiliary but essential role in vivo by binding to the 5'-leader sequence and broadening the substrate specificity of the ribozyme. The protein is Ribonuclease P protein component of Bifidobacterium longum (strain DJO10A).